A 312-amino-acid polypeptide reads, in one-letter code: Coproporphyrin III ferrochelatase (312 aa).

Fe-coproporphyrin III is bound by residues tyrosine 13, arginine 30, 46–47 (RY), serine 54, and tyrosine 125. Histidine 182 and glutamate 263 together coordinate Fe(2+).

Belongs to the ferrochelatase family.

Its subcellular location is the cytoplasm. It carries out the reaction Fe-coproporphyrin III + 2 H(+) = coproporphyrin III + Fe(2+). It participates in porphyrin-containing compound metabolism; protoheme biosynthesis. Involved in coproporphyrin-dependent heme b biosynthesis. Catalyzes the insertion of ferrous iron into coproporphyrin III to form Fe-coproporphyrin III. This chain is Coproporphyrin III ferrochelatase, found in Oceanobacillus iheyensis (strain DSM 14371 / CIP 107618 / JCM 11309 / KCTC 3954 / HTE831).